Reading from the N-terminus, the 279-residue chain is MKLCVALDLSTKEECLQLAKELKNLDIWLKVGLRAYLRDGFKFIEELKKVDDFKIFLDLKFHDIPNTMADACEEVSKLGVDMINIHASAGKIAIQEVMTRLSKFSKRPLVLAVSALTSFDEENFFSIYRQKIEEAVINFSKISYENGLDGMVCSVFESKKIKEHTSSNFLTLTPGIRPFGETNDDQKRVANLAMARENLSDYIVVGRPIYKNENPRAVCEKILNKIHRKNISENDIEQNYEVIQQKEWDMCNHFEEWIKTRPDKEHALKEFYAKCGIKY.

Substrate-binding positions include Asp8, Lys30, Asp58–Thr67, Thr117, Arg177, Gln186, Gly206, and Arg207. Lys60 acts as the Proton donor in catalysis.

The protein belongs to the OMP decarboxylase family. Type 1 subfamily. Homodimer.

It carries out the reaction orotidine 5'-phosphate + H(+) = UMP + CO2. It functions in the pathway pyrimidine metabolism; UMP biosynthesis via de novo pathway; UMP from orotate: step 2/2. In terms of biological role, catalyzes the decarboxylation of orotidine 5'-monophosphate (OMP) to uridine 5'-monophosphate (UMP). This is Orotidine 5'-phosphate decarboxylase from Campylobacter jejuni subsp. jejuni serotype O:2 (strain ATCC 700819 / NCTC 11168).